The primary structure comprises 341 residues: L-threonine 3-dehydrogenase (341 aa).

Cys-38 is a Zn(2+) binding site. Residues Thr-40 and His-43 each act as charge relay system in the active site. Residues His-63, Glu-64, Cys-93, Cys-96, Cys-99, and Cys-107 each coordinate Zn(2+). Residues Ile-175, Asp-195, Arg-200, 262 to 264 (LGI), and 286 to 287 (IY) each bind NAD(+).

It belongs to the zinc-containing alcohol dehydrogenase family. As to quaternary structure, homotetramer. Zn(2+) is required as a cofactor.

It localises to the cytoplasm. The enzyme catalyses L-threonine + NAD(+) = (2S)-2-amino-3-oxobutanoate + NADH + H(+). The protein operates within amino-acid degradation; L-threonine degradation via oxydo-reductase pathway; glycine from L-threonine: step 1/2. Catalyzes the NAD(+)-dependent oxidation of L-threonine to 2-amino-3-ketobutyrate. In Escherichia coli O157:H7, this protein is L-threonine 3-dehydrogenase.